The sequence spans 313 residues: N-acetyl-gamma-glutamyl-phosphate reductase (313 aa).

Cysteine 117 is an active-site residue.

The protein belongs to the NAGSA dehydrogenase family. Type 2 subfamily.

It is found in the cytoplasm. It catalyses the reaction N-acetyl-L-glutamate 5-semialdehyde + phosphate + NADP(+) = N-acetyl-L-glutamyl 5-phosphate + NADPH + H(+). It functions in the pathway amino-acid biosynthesis; L-arginine biosynthesis; N(2)-acetyl-L-ornithine from L-glutamate: step 3/4. Its function is as follows. Catalyzes the NADPH-dependent reduction of N-acetyl-5-glutamyl phosphate to yield N-acetyl-L-glutamate 5-semialdehyde. The protein is N-acetyl-gamma-glutamyl-phosphate reductase of Burkholderia cenocepacia (strain ATCC BAA-245 / DSM 16553 / LMG 16656 / NCTC 13227 / J2315 / CF5610) (Burkholderia cepacia (strain J2315)).